An 89-amino-acid polypeptide reads, in one-letter code: Small ribosomal subunit protein uS15 (89 aa).

Belongs to the universal ribosomal protein uS15 family. As to quaternary structure, part of the 30S ribosomal subunit. Forms a bridge to the 50S subunit in the 70S ribosome, contacting the 23S rRNA.

One of the primary rRNA binding proteins, it binds directly to 16S rRNA where it helps nucleate assembly of the platform of the 30S subunit by binding and bridging several RNA helices of the 16S rRNA. In terms of biological role, forms an intersubunit bridge (bridge B4) with the 23S rRNA of the 50S subunit in the ribosome. In Chromohalobacter salexigens (strain ATCC BAA-138 / DSM 3043 / CIP 106854 / NCIMB 13768 / 1H11), this protein is Small ribosomal subunit protein uS15.